The sequence spans 118 residues: Integration host factor subunit alpha (118 aa).

Positions 97–118 are disordered; sequence NGAMPMSTEESDENTAQSASGG.

This sequence belongs to the bacterial histone-like protein family. In terms of assembly, heterodimer of an alpha and a beta chain.

Functionally, this protein is one of the two subunits of integration host factor, a specific DNA-binding protein that functions in genetic recombination as well as in transcriptional and translational control. The chain is Integration host factor subunit alpha from Rhodopseudomonas palustris (strain ATCC BAA-98 / CGA009).